The following is a 530-amino-acid chain: Alpha-(1,3)-fucosyltransferase 4 (530 aa).

Disordered regions lie at residues 1 to 48 and 66 to 112; these read MRRL…RAVP and HLGG…STPA. The Cytoplasmic segment spans residues 1 to 147; that stretch reads MRRLWGAARK…GGRRGWRRGR (147 aa). Over residues 88–106 the composition is skewed to basic and acidic residues; that stretch reads ASGERQRRLEPQLQHESRC. The helical; Signal-anchor for type II membrane protein transmembrane segment at 148 to 172 threads the bilayer; that stretch reads GLPWTVCVLAAAGLTCTALITYACW. At 173 to 530 the chain is on the lumenal side; that stretch reads GQLPPLPWAS…IRNLASWFER (358 aa). Asparagine 216 and asparagine 315 each carry an N-linked (GlcNAc...) asparagine glycan.

This sequence belongs to the glycosyltransferase 10 family. As to expression, expressed at low levels in bone marrow-derived mesenchymal stem cells. In terms of tissue distribution, expressed in cord blood immature promyelocytes and in peripheral blood myeloid and lymphoid cell populations.

The protein localises to the golgi apparatus. It is found in the golgi stack membrane. The catalysed reaction is a beta-D-galactosyl-(1-&gt;4)-N-acetyl-beta-D-glucosaminyl derivative + GDP-beta-L-fucose = a beta-D-galactosyl-(1-&gt;4)-[alpha-L-fucosyl-(1-&gt;3)]-N-acetyl-beta-D-glucosaminyl derivative + GDP + H(+). The enzyme catalyses an N-acetyl-alpha-neuraminyl-(2-&gt;3)-beta-D-galactosyl-(1-&gt;4)-N-acetyl-beta-D-glucosaminyl derivative + GDP-beta-L-fucose = an alpha-Neu5Ac-(2-&gt;3)-beta-D-Gal-(1-&gt;4)-[alpha-L-Fuc-(1-&gt;3)]-beta-D-GlcNAc derivative + GDP + H(+). It catalyses the reaction an alpha-Neu5Ac-(2-&gt;3)-beta-D-Gal-(1-&gt;4)-beta-D-GlcNAc-(1-&gt;3)-beta-D-Gal-(1-&gt;4)-beta-D-GlcNAc derivative + GDP-beta-L-fucose = an alpha-Neu5Ac-(2-&gt;3)-beta-D-Gal-(1-&gt;4)-beta-D-GlcNAc-(1-&gt;3)-beta-D-Gal-(1-&gt;4)-[alpha-L-Fuc-(1-&gt;3)]-beta-D-GlcNAc derivative + GDP + H(+). It carries out the reaction an alpha-Neu5Ac-(2-&gt;3)-beta-D-Gal-(1-&gt;4)-beta-D-GlcNAc6S derivative + GDP-beta-L-fucose = an alpha-Neu5Ac-(2-&gt;3)-beta-D-Gal-(1-&gt;4)-[alpha-L-Fuc-(1-&gt;3)]-beta-D-GlcNAc6S derivative + GDP + H(+). The protein operates within protein modification; protein glycosylation. In terms of biological role, catalyzes alpha(1-&gt;3) linkage of fucosyl moiety transferred from GDP-beta-L-fucose to N-acetyl glucosamine (GlcNAc) within type 2 lactosamine (LacNAc, Gal-beta(1-&gt;4)GlcNAc) glycan attached to N- or O-linked glycoproteins. Robustly fucosylates nonsialylated distal LacNAc unit of the polylactosamine chain to form Lewis X antigen (CD15), a glycan determinant known to mediate important cellular functions in development and immunity. Fucosylates with lower efficiency sialylated LacNAc acceptors to form sialyl Lewis X and 6-sulfo sialyl Lewis X determinants that serve as recognition epitopes for C-type lectins. Together with FUT7 contributes to SELE, SELL and SELP selectin ligand biosynthesis and selectin-dependent lymphocyte homing, leukocyte migration and blood leukocyte homeostasis. In a cell type specific manner, may also fucosylate the internal LacNAc unit of the polylactosamine chain to form VIM-2 antigen that serves as recognition epitope for SELE. Its function is as follows. Does not generate Lewis X antigens. This chain is Alpha-(1,3)-fucosyltransferase 4, found in Homo sapiens (Human).